The chain runs to 196 residues: Probable molybdenum cofactor guanylyltransferase (196 aa).

Residues 7-9, Lys19, Asp68, and Asp93 contribute to the GTP site; that span reads LAG. Residue Asp93 coordinates Mg(2+).

The protein belongs to the MobA family. The cofactor is Mg(2+).

It localises to the cytoplasm. The enzyme catalyses Mo-molybdopterin + GTP + H(+) = Mo-molybdopterin guanine dinucleotide + diphosphate. Its function is as follows. Transfers a GMP moiety from GTP to Mo-molybdopterin (Mo-MPT) cofactor (Moco or molybdenum cofactor) to form Mo-molybdopterin guanine dinucleotide (Mo-MGD) cofactor. The protein is Probable molybdenum cofactor guanylyltransferase of Pyrococcus furiosus (strain ATCC 43587 / DSM 3638 / JCM 8422 / Vc1).